Here is a 429-residue protein sequence, read N- to C-terminus: Saccharopine dehydrogenase-like oxidoreductase (429 aa).

Alanine 2 carries the N-acetylalanine modification. 3 positions are modified to phosphoserine: serine 209, serine 215, and serine 217.

This sequence belongs to the saccharopine dehydrogenase family.

The chain is Saccharopine dehydrogenase-like oxidoreductase (Sccpdh) from Mus musculus (Mouse).